A 172-amino-acid polypeptide reads, in one-letter code: MTINQDSFTKEELLACSRGELFGPGNSQLPAPNMLMMDRIVKISEEDGEHGKGVIIAELDITPDLWFFDCHFPGDPVMPGCLGLDAMWQLVGFFLGWCGGPGKGRALGVGEVKFSGQILPTAKKVTYKIDMKRVIKRKLFMGIGDGEVSVDGRVIYQAKDLKVGLFQDTSNF.

The active site involves His71.

It belongs to the thioester dehydratase family. FabA subfamily. In terms of assembly, homodimer.

The protein resides in the cytoplasm. It catalyses the reaction a (3R)-hydroxyacyl-[ACP] = a (2E)-enoyl-[ACP] + H2O. It carries out the reaction (3R)-hydroxydecanoyl-[ACP] = (2E)-decenoyl-[ACP] + H2O. The enzyme catalyses (2E)-decenoyl-[ACP] = (3Z)-decenoyl-[ACP]. Its pathway is lipid metabolism; fatty acid biosynthesis. In terms of biological role, necessary for the introduction of cis unsaturation into fatty acids. Catalyzes the dehydration of (3R)-3-hydroxydecanoyl-ACP to E-(2)-decenoyl-ACP and then its isomerization to Z-(3)-decenoyl-ACP. Can catalyze the dehydratase reaction for beta-hydroxyacyl-ACPs with saturated chain lengths up to 16:0, being most active on intermediate chain length. The sequence is that of 3-hydroxydecanoyl-[acyl-carrier-protein] dehydratase from Pseudoalteromonas atlantica (strain T6c / ATCC BAA-1087).